A 45-amino-acid chain; its full sequence is Large ribosomal subunit protein bL34 (45 aa).

Belongs to the bacterial ribosomal protein bL34 family.

The sequence is that of Large ribosomal subunit protein bL34 from Corynebacterium urealyticum (strain ATCC 43042 / DSM 7109).